Here is a 31-residue protein sequence, read N- to C-terminus: Cliotide T11 (31 aa).

The segment at residues 1–31 is a cross-link (cyclopeptide (Gly-Asn)); sequence GIPCGESCVFIPCTITALLGCSCKDKVCYKN. Cystine bridges form between Cys-4–Cys-21, Cys-8–Cys-23, and Cys-13–Cys-28.

In terms of processing, contains 3 disulfide bonds. This is a cyclic peptide. As to expression, expressed in seed but not in root, nodule, flower, stem, shoot, leaf and pod (at protein level).

Its function is as follows. Probably participates in a plant defense mechanism. This is Cliotide T11 from Clitoria ternatea (Butterfly pea).